The sequence spans 201 residues: Small ribosomal subunit protein uS4c (201 aa).

The disordered stretch occupies residues 17 to 44 (ALPGLTNKKPRTGSDLRNQSRSGKKSQY). Residues 89–149 (MRLDNILFRL…DEQKSRALIQ (61 aa)) enclose the S4 RNA-binding domain.

It belongs to the universal ribosomal protein uS4 family. As to quaternary structure, part of the 30S ribosomal subunit. Contacts protein S5. The interaction surface between S4 and S5 is involved in control of translational fidelity.

It is found in the plastid. The protein localises to the chloroplast. In terms of biological role, one of the primary rRNA binding proteins, it binds directly to 16S rRNA where it nucleates assembly of the body of the 30S subunit. Functionally, with S5 and S12 plays an important role in translational accuracy. This is Small ribosomal subunit protein uS4c (rps4) from Solanum bulbocastanum (Wild potato).